Here is a 1855-residue protein sequence, read N- to C-terminus: Collagen alpha-1(XXVII) chain (1855 aa).

A signal peptide spans 1 to 48; sequence MGLARATAGLGPCCPPAPALLGAGLRWGGFLFAWILVSFSCHLASTQG. Residues 49 to 618 constitute a propeptide, N-terminal propeptide; that stretch reads APEDVDVLQR…PEPTPFLMLM (570 aa). Residues 81–246 enclose the Laminin G-like domain; the sequence is PSGFIFTQRA…NYCAHLRERC (166 aa). Residues Asn-281 and Asn-349 are each glycosylated (N-linked (GlcNAc...) asparagine). Disordered regions lie at residues 317 to 428, 511 to 580, 617 to 787, and 838 to 1617; these read DVSK…SATV, PPLG…SQLS, LMGP…GFPG, and GGVG…HPVQ. 2 stretches are compositionally biased toward polar residues: residues 382-427 and 520-532; these read LSVT…SSAT and MMPSTRDSTSTPA. Over residues 563–573 the composition is skewed to basic and acidic residues; the sequence is TARDASPRDLT. 13 Collagen-like domains span residues 619–673, 682–741, 751–810, 826–885, 886–945, 946–1005, 1006–1047, 1048–1105, 1108–1155, 1156–1215, 1216–1275, 1276–1330, and 1334–1393; these read GPPG…GDPG, GAKG…PGPV, GYIG…PGPP, GYPG…PGPM, GKAG…EGPM, GPPG…VGEK, GDRG…PGSR, GLPG…GAKG, GIPG…PGLP, GDSG…KGQE, GLKG…PGTP, GPKG…GEDG, and GAPG…KGSK. The tract at residues 619 to 1612 is triple-helical region; that stretch reads GPPGSKGDCG…RGRPGPPGPP (994 aa). A compositionally biased stretch (pro residues) spans 630–663; the sequence is PGPPGLPGLPGSPGPRGPRGPPGPFGNPGLPGPP. Low complexity predominate over residues 708–728; it reads PGAAGHPGEQGQPGPEGSPGA. Over residues 905 to 918 the composition is skewed to low complexity; that stretch reads FPGDIGPPGDNGPE. The span at 1027-1036 shows a compositional bias: gly residues; that stretch reads GTPGGVGDPG. Low complexity-rich tracts occupy residues 1083–1095, 1121–1131, and 1161–1176; these read RGRPGQPGQQGAA, LPGEPGSQGPQ, and KGDLGPLGPPGEQGLI. Basic and acidic residues-rich tracts occupy residues 1196-1221, 1320-1332, and 1344-1354; these read LKGDRGDPGPDGEHGEKGQEGLKGEE, KGEKGEQGEDGKT, and PVGDRGDRGEP. Composition is skewed to low complexity over residues 1369–1378 and 1404–1431; these read RGEPGQQGQP and KAGASGRRGTQGLQGLPGPRGVVGRQGP. 3 Collagen-like domains span residues 1433–1492, 1493–1552, and 1553–1612; these read GMAG…SGLP, GQLG…KGIQ, and GPRG…PGPP. The segment covering 1566-1581 has biased composition (low complexity); that stretch reads IIGPPGMLGPSGLPGP. A compositionally biased stretch (pro residues) spans 1597–1614; that stretch reads RGPPGPRGRPGPPGPPWH. A propeptide spans 1616 to 1855 (C-terminal propeptide); sequence VQFQQDDLEA…RLEVGPACFL (240 aa). Residues 1655 to 1855 form the Fibrillar collagen NC1 domain; sequence GEIFKTLHYL…RLEVGPACFL (201 aa). 3 cysteine pairs are disulfide-bonded: Cys-1685–Cys-1717, Cys-1726–Cys-1853, and Cys-1762–Cys-1806. Ca(2+) contacts are provided by Asp-1703, Asn-1705, Cys-1708, and Asp-1711. Residue Asn-1764 is glycosylated (N-linked (GlcNAc...) asparagine).

The protein belongs to the fibrillar collagen family.

The protein localises to the secreted. It is found in the extracellular space. It localises to the extracellular matrix. Functionally, plays a role during the calcification of cartilage and the transition of cartilage to bone. In Rattus norvegicus (Rat), this protein is Collagen alpha-1(XXVII) chain (Col27a1).